The sequence spans 127 residues: Small ribosomal subunit protein uS11 (127 aa).

It belongs to the universal ribosomal protein uS11 family. As to quaternary structure, part of the 30S ribosomal subunit. Interacts with proteins S7 and S18. Binds to IF-3.

Functionally, located on the platform of the 30S subunit, it bridges several disparate RNA helices of the 16S rRNA. Forms part of the Shine-Dalgarno cleft in the 70S ribosome. In Chlorobium phaeobacteroides (strain DSM 266 / SMG 266 / 2430), this protein is Small ribosomal subunit protein uS11.